A 250-amino-acid polypeptide reads, in one-letter code: Small ribosomal subunit protein uS5 (250 aa).

Residues 1 to 22 (MNVVETSSEMNSNVEKASTPKQ) are compositionally biased toward polar residues. The segment at 1-40 (MNVVETSSEMNSNVEKASTPKQENNKRFERKSRPSSRQKV) is disordered. Residues 45-108 (FEEKVVTIRR…KEAKKNLVSV (64 aa)) form the S5 DRBM domain.

Belongs to the universal ribosomal protein uS5 family. Part of the 30S ribosomal subunit. Contacts proteins S4 and S8.

Functionally, with S4 and S12 plays an important role in translational accuracy. Its function is as follows. Located at the back of the 30S subunit body where it stabilizes the conformation of the head with respect to the body. The polypeptide is Small ribosomal subunit protein uS5 (Mycoplasma capricolum subsp. capricolum (strain California kid / ATCC 27343 / NCTC 10154)).